Consider the following 38-residue polypeptide: Photosystem II reaction center protein L (38 aa).

The chain crosses the membrane as a helical span at residues 17-37 (SLYWGLLLIFVLAVLFSNYFF).

The protein belongs to the PsbL family. In terms of assembly, PSII is composed of 1 copy each of membrane proteins PsbA, PsbB, PsbC, PsbD, PsbE, PsbF, PsbH, PsbI, PsbJ, PsbK, PsbL, PsbM, PsbT, PsbX, PsbY, PsbZ, Psb30/Ycf12, at least 3 peripheral proteins of the oxygen-evolving complex and a large number of cofactors. It forms dimeric complexes.

The protein localises to the plastid. The protein resides in the chloroplast thylakoid membrane. One of the components of the core complex of photosystem II (PSII). PSII is a light-driven water:plastoquinone oxidoreductase that uses light energy to abstract electrons from H(2)O, generating O(2) and a proton gradient subsequently used for ATP formation. It consists of a core antenna complex that captures photons, and an electron transfer chain that converts photonic excitation into a charge separation. This subunit is found at the monomer-monomer interface and is required for correct PSII assembly and/or dimerization. The sequence is that of Photosystem II reaction center protein L from Huperzia lucidula (Shining clubmoss).